Reading from the N-terminus, the 269-residue chain is uncharacterized protein (269 aa).

103–110 contributes to the ATP binding site; the sequence is GIFTMGKS.

This is an uncharacterized protein from Mycoplasma pneumoniae (strain ATCC 29342 / M129 / Subtype 1) (Mycoplasmoides pneumoniae).